Consider the following 1564-residue polypeptide: Nucleoporin nup184 (1564 aa).

It localises to the nucleus. The protein localises to the nuclear pore complex. Functionally, interacts with pom152 in the core structure of the nuclear pore complex (NPC). Involved in the export of mRNA. In Schizosaccharomyces pombe (strain 972 / ATCC 24843) (Fission yeast), this protein is Nucleoporin nup184 (nup184).